A 512-amino-acid polypeptide reads, in one-letter code: ETS translocation variant 3 (512 aa).

Residues 35–116 (IQLWHFILEL…KGKRFTYKFN (82 aa)) constitute a DNA-binding region (ETS). A disordered region spans residues 136 to 222 (VPQSAPPVPT…NAIGGGGIGH (87 aa)). Phosphoserine is present on residues S139, S159, and S315. The segment covering 158-184 (HSPTNDVQPGRFSASSLTASGQESSNG) has biased composition (polar residues). The interval 336–512 (PEESTQFSIK…QGLATAAADA (177 aa)) is disordered. Composition is skewed to basic and acidic residues over residues 380 to 406 (IKVEPASEKDPESLRQSAREKEEHTQE), 453 to 468 (DRPGKEPSAPEKKEDA), and 479 to 491 (RWNDDPEARELSK). K381 participates in a covalent cross-link: Glycyl lysine isopeptide (Lys-Gly) (interchain with G-Cter in SUMO2). K388 bears the N6-acetyllysine; alternate mark. Residue K388 forms a Glycyl lysine isopeptide (Lys-Gly) (interchain with G-Cter in SUMO2); alternate linkage.

It belongs to the ETS family.

It localises to the nucleus. Its function is as follows. Transcriptional repressor that contribute to growth arrest during terminal macrophage differentiation by repressing target genes involved in Ras-dependent proliferation. Represses MMP1 promoter activity. This chain is ETS translocation variant 3 (ETV3), found in Homo sapiens (Human).